The primary structure comprises 534 residues: GMP synthase [glutamine-hydrolyzing] (534 aa).

One can recognise a Glutamine amidotransferase type-1 domain in the interval 4 to 202; that stretch reads KILILDFGSQ…VLEIAKAQPD (199 aa). Residue Cys-81 is the Nucleophile of the active site. Catalysis depends on residues His-176 and Glu-178. In terms of domain architecture, GMPS ATP-PPase spans 203–402; the sequence is WVMKDHVAEA…LGLPHDMVYR (200 aa). Residue 230–236 coordinates ATP; it reads SGGVDSS.

Homodimer.

It carries out the reaction XMP + L-glutamine + ATP + H2O = GMP + L-glutamate + AMP + diphosphate + 2 H(+). The protein operates within purine metabolism; GMP biosynthesis; GMP from XMP (L-Gln route): step 1/1. In terms of biological role, catalyzes the synthesis of GMP from XMP. The protein is GMP synthase [glutamine-hydrolyzing] of Methylibium petroleiphilum (strain ATCC BAA-1232 / LMG 22953 / PM1).